The sequence spans 416 residues: Adenylosuccinate synthetase (416 aa).

GTP is bound by residues 12–18 (GDEGKGK) and 40–42 (GHT). The active-site Proton acceptor is Asp13. Residues Asp13 and Gly40 each contribute to the Mg(2+) site. IMP contacts are provided by residues 13 to 16 (DEGK), 38 to 41 (NAGH), Thr125, Arg139, Gln220, Thr235, and Arg299. Residue His41 is the Proton donor of the active site. 295–301 (TTTGRPR) contributes to the substrate binding site. Residues Arg301, 327 to 329 (KLD), and 405 to 407 (STS) contribute to the GTP site.

It belongs to the adenylosuccinate synthetase family. Homodimer. The cofactor is Mg(2+).

It is found in the cytoplasm. It carries out the reaction IMP + L-aspartate + GTP = N(6)-(1,2-dicarboxyethyl)-AMP + GDP + phosphate + 2 H(+). Its pathway is purine metabolism; AMP biosynthesis via de novo pathway; AMP from IMP: step 1/2. Functionally, plays an important role in the de novo pathway of purine nucleotide biosynthesis. Catalyzes the first committed step in the biosynthesis of AMP from IMP. This is Adenylosuccinate synthetase from Nitratiruptor sp. (strain SB155-2).